Reading from the N-terminus, the 187-residue chain is Lysozyme 3 (187 aa).

Residues 1 to 18 (MNGLFLFCVATTAALAYG) form the signal peptide. One can recognise an I-type lysozyme domain in the interval 68 to 183 (TGIVSQQCLQ…WSHVHAQGCS (116 aa)). Cystine bridges form between Cys75-Cys151, Cys80-Cys86, Cys91-Cys100, Cys113-Cys133, Cys123-Cys129, and Cys147-Cys165. Glu83 functions as the Proton donor in the catalytic mechanism. Asp94 (nucleophile) is an active-site residue. Position 106 to 112 (106 to 112 (KEGYWHD)) interacts with substrate. Substrate is bound by residues Tyr137 and 158–160 (HNG).

Highest levels of expression detected in the digestive glands. Lower levels in the mantle, labial palps, gills and style-midgut sac, and lowest levels detected in the hemocytes. Not detected in the gonads.

The protein localises to the secreted. It catalyses the reaction Hydrolysis of (1-&gt;4)-beta-linkages between N-acetylmuramic acid and N-acetyl-D-glucosamine residues in a peptidoglycan and between N-acetyl-D-glucosamine residues in chitodextrins.. Functionally, has antibacterial activity against the Gram-negative bacterium E.coli. No antibacterial activity detected against the Gram-negative bacterium V.vulnificus. This Crassostrea virginica (Eastern oyster) protein is Lysozyme 3.